The chain runs to 72 residues: DNA-directed RNA polymerase subunit epsilon (72 aa).

Belongs to the RNA polymerase subunit epsilon family. RNAP is composed of a core of 2 alpha, a beta and a beta' subunit. The core is associated with a delta subunit, and at least one of epsilon or omega. When a sigma factor is associated with the core the holoenzyme is formed, which can initiate transcription.

The catalysed reaction is RNA(n) + a ribonucleoside 5'-triphosphate = RNA(n+1) + diphosphate. Its function is as follows. A non-essential component of RNA polymerase (RNAP). The chain is DNA-directed RNA polymerase subunit epsilon from Levilactobacillus brevis (strain ATCC 367 / BCRC 12310 / CIP 105137 / JCM 1170 / LMG 11437 / NCIMB 947 / NCTC 947) (Lactobacillus brevis).